A 414-amino-acid chain; its full sequence is Small ribosomal subunit protein mS46 (414 aa).

Positions 20–35 are enriched in polar residues; sequence LNAQQQQRPFSSTTTR. Disordered stretches follow at residues 20-71 and 168-229; these read LNAQ…EAAV and AGPG…DAPP. Composition is skewed to low complexity over residues 45-59 and 168-200; these read PAAA…APGP and AGPG…PFGA. Over residues 205–224 the composition is skewed to basic and acidic residues; sequence PAGDKKRSGGSGDKRPRGDD.

This sequence belongs to the mitochondrion-specific ribosomal protein mS46 family. Component of the mitochondrial small ribosomal subunit (mt-SSU). Mature N.crassa 74S mitochondrial ribosomes consist of a small (37S) and a large (54S) subunit. The 37S small subunit contains a 16S ribosomal RNA (16S mt-rRNA) and 32 different proteins. The 54S large subunit contains a 23S rRNA (23S mt-rRNA) and 42 different proteins.

The protein localises to the mitochondrion. Functionally, component of the mitochondrial ribosome (mitoribosome), a dedicated translation machinery responsible for the synthesis of mitochondrial genome-encoded proteins, including at least some of the essential transmembrane subunits of the mitochondrial respiratory chain. The mitoribosomes are attached to the mitochondrial inner membrane and translation products are cotranslationally integrated into the membrane. This Neurospora crassa (strain ATCC 24698 / 74-OR23-1A / CBS 708.71 / DSM 1257 / FGSC 987) protein is Small ribosomal subunit protein mS46 (rsm28).